The primary structure comprises 231 residues: MTITIALPSKGRMKDDASAIFERAGMPITAVGNDRSYRGRVEGWDDVEVAFLSASEISRELGNGTVDFGVTGEDLMREGFAEVDKRVEFCARLGFGHADVVVAVPEIWLDVETMADLGDVAADFRARHSRRLAIATKYWRLTQQFFSSQHGIQLYRIVESLGATEGAPASGSADIIVDITSTGSTLRANHLKVLQDGVILHSQACLVRARKESHADEPVVQAIIEAVRAAL.

It belongs to the ATP phosphoribosyltransferase family. Short subfamily. In terms of assembly, heteromultimer composed of HisG and HisZ subunits.

It localises to the cytoplasm. It carries out the reaction 1-(5-phospho-beta-D-ribosyl)-ATP + diphosphate = 5-phospho-alpha-D-ribose 1-diphosphate + ATP. It participates in amino-acid biosynthesis; L-histidine biosynthesis; L-histidine from 5-phospho-alpha-D-ribose 1-diphosphate: step 1/9. Its function is as follows. Catalyzes the condensation of ATP and 5-phosphoribose 1-diphosphate to form N'-(5'-phosphoribosyl)-ATP (PR-ATP). Has a crucial role in the pathway because the rate of histidine biosynthesis seems to be controlled primarily by regulation of HisG enzymatic activity. The polypeptide is ATP phosphoribosyltransferase (hisG) (Rhizobium etli (strain CIAT 652)).